The following is a 487-amino-acid chain: Serralysin (487 aa).

The propeptide occupies 1 to 16 (MQSTKKAIEITESNFA). H192 is a binding site for Zn(2+). The active site involves E193. H196, H202, and Y232 together coordinate Zn(2+). 32 residues coordinate Ca(2+): R269, G271, T273, D301, G303, G304, D306, T343, E345, G350, G352, D354, N359, A361, N363, G367, G368, A369, D372, G376, G377, G378, G379, D381, G385, G386, A387, G388, D390, D399, D406, and D416. Hemolysin-type calcium-binding repeat units follow at residues 348–365 (IGGSGNDVIVGNAANNVL) and 366–383 (KGGAGNDVLFGGGGADEL).

Belongs to the peptidase M10B family. The cofactor is Ca(2+). Zn(2+) serves as cofactor.

Its subcellular location is the secreted. It carries out the reaction Preferential cleavage of bonds with hydrophobic residues in P1'.. Naturally present in the silkworm intestine and allows the emerging moth to dissolve its cocoon. This is Serralysin from Serratia marcescens (strain ATCC 21074 / E-15).